Consider the following 87-residue polypeptide: Defensin-like protein 223 (87 aa).

The first 34 residues, 1 to 34 (MKSTIFVLTLLIFVSLYFNIIVYVSFSFIGTSEI), serve as a signal peptide directing secretion. Intrachain disulfides connect C55–C72, C58–C77, and C62–C79.

It belongs to the DEFL family.

The protein resides in the secreted. The polypeptide is Defensin-like protein 223 (Arabidopsis thaliana (Mouse-ear cress)).